We begin with the raw amino-acid sequence, 148 residues long: uncharacterized protein (148 aa).

2 CBS domains span residues 8–68 (MTAD…PNSQ) and 74–130 (MTEK…ERAG). The segment at 127–148 (ERAGSALSDISEGDNREEGFFH) is disordered. The span at 139–148 (GDNREEGFFH) shows a compositional bias: basic and acidic residues.

This is an uncharacterized protein from Bacillus subtilis (strain 168).